We begin with the raw amino-acid sequence, 213 residues long: Probable nicotinate-nucleotide adenylyltransferase (213 aa).

The protein belongs to the NadD family.

It carries out the reaction nicotinate beta-D-ribonucleotide + ATP + H(+) = deamido-NAD(+) + diphosphate. The protein operates within cofactor biosynthesis; NAD(+) biosynthesis; deamido-NAD(+) from nicotinate D-ribonucleotide: step 1/1. Catalyzes the reversible adenylation of nicotinate mononucleotide (NaMN) to nicotinic acid adenine dinucleotide (NaAD). In Pectobacterium atrosepticum (strain SCRI 1043 / ATCC BAA-672) (Erwinia carotovora subsp. atroseptica), this protein is Probable nicotinate-nucleotide adenylyltransferase.